A 281-amino-acid polypeptide reads, in one-letter code: Pantothenate synthetase (281 aa).

Residue Met-30 to His-37 coordinates ATP. Residue His-37 is the Proton donor of the active site. Position 61 (Gln-61) interacts with (R)-pantoate. Residue Gln-61 coordinates beta-alanine. Gly-149 to Asp-152 contributes to the ATP binding site. Position 155 (Gln-155) interacts with (R)-pantoate. Residues Ile-178 and Met-186–Arg-189 each bind ATP.

It belongs to the pantothenate synthetase family. Homodimer.

It localises to the cytoplasm. The catalysed reaction is (R)-pantoate + beta-alanine + ATP = (R)-pantothenate + AMP + diphosphate + H(+). Its pathway is cofactor biosynthesis; (R)-pantothenate biosynthesis; (R)-pantothenate from (R)-pantoate and beta-alanine: step 1/1. Its function is as follows. Catalyzes the condensation of pantoate with beta-alanine in an ATP-dependent reaction via a pantoyl-adenylate intermediate. The sequence is that of Pantothenate synthetase from Shewanella baltica (strain OS223).